The sequence spans 127 residues: Auxin-responsive protein SAUR76 (127 aa).

Positions 20–40 (SFNTKPNQPPAQTNHSRSSAV) are disordered.

This sequence belongs to the ARG7 family. Expressed in cotyledons, hypocotyls and roots of young seedlings. Expressed in emerging lateral root, leaves, flowers, stamens and filaments.

Its subcellular location is the nucleus. The protein localises to the cytoplasm. The protein resides in the cell membrane. In terms of biological role, may be involved in the regulation of ethylene receptor signaling. Promotes cell expansion and plant growth. Involved in the regulation of cell elongation. In Arabidopsis thaliana (Mouse-ear cress), this protein is Auxin-responsive protein SAUR76.